The following is a 223-amino-acid chain: Deoxyribose-phosphate aldolase (223 aa).

The active-site Proton donor/acceptor is the Asp89. The active-site Schiff-base intermediate with acetaldehyde is Lys152. Lys181 acts as the Proton donor/acceptor in catalysis.

It belongs to the DeoC/FbaB aldolase family. DeoC type 1 subfamily.

It is found in the cytoplasm. It carries out the reaction 2-deoxy-D-ribose 5-phosphate = D-glyceraldehyde 3-phosphate + acetaldehyde. Its pathway is carbohydrate degradation; 2-deoxy-D-ribose 1-phosphate degradation; D-glyceraldehyde 3-phosphate and acetaldehyde from 2-deoxy-alpha-D-ribose 1-phosphate: step 2/2. Functionally, catalyzes a reversible aldol reaction between acetaldehyde and D-glyceraldehyde 3-phosphate to generate 2-deoxy-D-ribose 5-phosphate. The chain is Deoxyribose-phosphate aldolase from Bacillus cereus (strain ATCC 10987 / NRS 248).